Consider the following 463-residue polypeptide: EPD1-interacting receptor-like cytoplasmic serine/threonine-protein kinase (463 aa).

Residues 91–383 form the Protein kinase domain; sequence FSSANFLGKG…LTDIPIGPFV (293 aa). Residues 97–105 and Lys-126 each bind ATP; that span reads LGKGGFGPV. Phosphotyrosine occurs at positions 171 and 173. Catalysis depends on Asp-221, which acts as the Proton acceptor.

The protein belongs to the protein kinase superfamily. Ser/Thr protein kinase family. In terms of assembly, interacts with the V.dahliae elicitor EPD1 (AC G2WWH6). In terms of processing, phosphorylated at Tyr-171 and Tyr-173 in the presence of pathogen-associated molecular patterns (PAMPs); this triggers the expression of pathogenesis-related genes.

The protein resides in the cell membrane. It catalyses the reaction L-seryl-[protein] + ATP = O-phospho-L-seryl-[protein] + ADP + H(+). The enzyme catalyses L-threonyl-[protein] + ATP = O-phospho-L-threonyl-[protein] + ADP + H(+). Functionally, required for pathogen-associated molecular pattern (PAMP, e.g. chitin and flg22)-triggered immunity (PTI) involving reactive oxygen species (ROS) accumulation and triggering plant defense, including defense-related gene expression (e.g. PR1 and LOX). Ensures specific recognition of the EPD1 effector of Verticillium dahliae, resulting in a hypersensitive response known as effector-triggered immunity (ETI), characterized by the activation of programmed cell death to limit infection by the pathogen. Priming plants with the incompatible pathogen V.dahliae leads to an increased resistance to both the broad-host-range filamentous pathogen Botrytis cinerea and the semibiotrophic pathogen Phytophthora capsici, as a result of systemic acquired resistance (SAR). In Nicotiana benthamiana, this protein is EPD1-interacting receptor-like cytoplasmic serine/threonine-protein kinase.